A 1346-amino-acid polypeptide reads, in one-letter code: Pikromycin polyketide synthase component PikAIV (1346 aa).

Residues 3 to 32 (SSNEQLVDALRASLKENEELRKESRRRADR) adopt a coiled-coil conformation. The Ketosynthase family 3 (KS3) domain maps to 34–461 (QEPMAIVGMS…GTNAHVVLEE (428 aa)). A module 6 region spans residues 37–1332 (MAIVGMSCRF…HAPAVAEAVL (1296 aa)). Active-site for beta-ketoacyl synthase activity residues include Cys207, His342, and His382. The segment at 562–844 (FVFPGQGTQW…VLTMTLPDKV (283 aa)) is acyltransferase. The active-site Acyl-ester intermediate; for acyltransferase activity is the Ser652. Positions 945–1020 (SAVLAMVMRQ…ALAERISDEL (76 aa)) constitute a Carrier domain. Ser980 carries the post-translational modification O-(pantetheine 4'-phosphoryl)serine. Positions 1028–1050 (AEPSDHEQAEEEKAAAPAGARSG) are disordered. Over residues 1030 to 1041 (PSDHEQAEEEKA) the composition is skewed to basic and acidic residues. Thr1125 contributes to the substrate binding site. The tract at residues 1127 to 1332 (ANGGPHEFLR…HAPAVAEAVL (206 aa)) is thioesterase. Ser1196 serves as the catalytic Nucleophile; for thioesterase activity. Positions 1197 and 1224 each coordinate substrate. Catalysis depends on His1316, which acts as the Proton acceptor; for thioesterase activity.

Homodimer. Pikromycin PKS consists of a combination of multimodular (PikAI and PikAII) and monomodular (PikAIII and PikAIV) polypeptides each coding for a functional synthase subunit which participates in 1 (monomodular) or 2 (multimodular) of the six FAS-like elongation steps required for formation of the polyketide. Module 1, 2, 3, 4, 5, and 6 participating in biosynthesis steps 1, 2, 3, 4, 5, and 6, respectively. The cofactor is pantetheine 4'-phosphate.

The catalysed reaction is 5 (S)-methylmalonyl-CoA + malonyl-CoA + 5 NADPH + 11 H(+) = 10-deoxymethynolide + 6 CO2 + 5 NADP(+) + 6 CoA + 2 H2O. It catalyses the reaction 6 (S)-methylmalonyl-CoA + malonyl-CoA + 5 NADPH + 12 H(+) = narbonolide + 7 CO2 + 5 NADP(+) + 7 CoA + 2 H2O. It functions in the pathway antibiotic biosynthesis. Irreversibly inhibited by (2S,3R,4S)-2,4-dihydroxy-3-methylhexyl-phosphonic acid and (3R,4S)-4-hydroxy-3-methyl-2-oxohexyl-phosphonic acid. Its function is as follows. Involved in the biosynthesis of 12- and 14-membered ring macrolactone antibiotics such as methymycin and neomethymycin, and pikromycin and narbomycin, respectively. Component of the pikromycin PKS which catalyzes the biosynthesis of both precursors 10-deoxymethynolide (12-membered ring macrolactone) and narbonolide (14-membered ring macrolactone). Chain elongation through PikAI, PikAII and PikAIII followed by thioesterase catalyzed termination results in the production of 10-deoxymethynolide, while continued elongation through PikAIV, followed by thioesterase (TE) catalyzed cyclization results in the biosynthesis of the narbonolide. The thioesterase can use a series of diketide-N-acetylcysteamine (SNAC) thioesters, but has a strong preference for the 2-methyl-3-ketopentanoyl-SNAC over the stereoisomers of 2-methyl-3-hydroxyacyl-SNAC. This chain is Pikromycin polyketide synthase component PikAIV, found in Streptomyces venezuelae.